A 494-amino-acid polypeptide reads, in one-letter code: Cytochrome P450 2A13 (494 aa).

Asn-297 contacts substrate. Cys-439 lines the heme pocket.

It belongs to the cytochrome P450 family. Heme serves as cofactor. In terms of tissue distribution, expressed in liver and a number of extrahepatic tissues, including nasal mucosa, lung, trachea, brain, mammary gland, prostate, testis, and uterus, but not in heart, kidney, bone marrow, colon, small intestine, spleen, stomach, thymus, or skeletal muscle.

It localises to the endoplasmic reticulum membrane. The protein resides in the microsome membrane. It carries out the reaction an organic molecule + reduced [NADPH--hemoprotein reductase] + O2 = an alcohol + oxidized [NADPH--hemoprotein reductase] + H2O + H(+). In terms of biological role, exhibits a coumarin 7-hydroxylase activity. Active in the metabolic activation of hexamethylphosphoramide, N,N-dimethylaniline, 2'-methoxyacetophenone, N-nitrosomethylphenylamine, and the tobacco-specific carcinogen, 4-(methylnitrosamino)-1-(3-pyridyl)-1-butanone. Possesses phenacetin O-deethylation activity. In Homo sapiens (Human), this protein is Cytochrome P450 2A13 (CYP2A13).